The chain runs to 1357 residues: DNA-directed RNA polymerase subunit beta (1357 aa).

It belongs to the RNA polymerase beta chain family. In terms of assembly, the RNAP catalytic core consists of 2 alpha, 1 beta, 1 beta' and 1 omega subunit. When a sigma factor is associated with the core the holoenzyme is formed, which can initiate transcription.

The catalysed reaction is RNA(n) + a ribonucleoside 5'-triphosphate = RNA(n+1) + diphosphate. Functionally, DNA-dependent RNA polymerase catalyzes the transcription of DNA into RNA using the four ribonucleoside triphosphates as substrates. This Pseudomonas putida (strain GB-1) protein is DNA-directed RNA polymerase subunit beta.